Consider the following 1185-residue polypeptide: ELMO domain-containing protein F (1185 aa).

Disordered regions lie at residues 88 to 133 (QPSP…GNNN), 176 to 196 (ISTNPNNNSNNNNNNNNNTAE), 361 to 409 (NNNS…VENE), 566 to 628 (KSTD…NTKS), 642 to 805 (ETER…KSSG), 819 to 868 (LGEK…PYII), 883 to 989 (DLDF…TQVT), and 1044 to 1114 (QKQK…KPVL). 4 stretches are compositionally biased toward low complexity: residues 94–127 (STIHNNSSTSINQSSSPSSSSSTTPSSSTQSSPI), 176–194 (ISTNPNNNSNNNNNNNNNT), 361–406 (NNNS…NNNV), and 587–613 (PQSQQQSQQQTQQTQQPASPLQTSSSS). The ELMO domain maps to 275-488 (DRQNVLSFLN…KTRAVLSRIK (214 aa)). Residues 648–665 (SLTGSNGITDGGDSNPNS) show a composition bias toward polar residues. Low complexity predominate over residues 688–699 (SENGSSSSFSFE). The segment covering 721 to 732 (FNSLTGELTMNI) has biased composition (polar residues). 2 stretches are compositionally biased toward low complexity: residues 733-760 (SSSSSLEGNQQQQQQQSTNSSTTSPNVS) and 767-780 (TTTTTNTTTATTTT). A compositionally biased stretch (polar residues) spans 781 to 790 (DDQSQQQVPP). The span at 829-841 (KVKSKKEKKKKSK) shows a compositional bias: basic residues. Composition is skewed to low complexity over residues 853–864 (NNSANNSSYNNS), 912–974 (SSSN…QQPQ), 1053–1072 (DENQNQNNNNNKLSDNSSNE), and 1096–1109 (GRNSTLNSGSSSLS).

In Dictyostelium discoideum (Social amoeba), this protein is ELMO domain-containing protein F (elmoF).